A 146-amino-acid chain; its full sequence is Hemoglobin subunit beta-1/2 (146 aa).

At V1 the chain carries N-acetylvaline. Residues 2 to 146 form the Globin domain; sequence HLTPDEKNAV…VATALAHKYH (145 aa). Phosphoserine is present on S44. K59 is modified (N6-acetyllysine). Heme b-binding residues include H63 and H92. The residue at position 93 (C93) is an S-nitrosocysteine. K144 carries the post-translational modification N6-acetyllysine.

This sequence belongs to the globin family. Heterotetramer of two alpha chains and two beta chains. In terms of tissue distribution, red blood cells.

Functionally, involved in oxygen transport from the lung to the various peripheral tissues. This chain is Hemoglobin subunit beta-1/2 (HBB), found in Otolemur crassicaudatus (Brown greater galago).